The chain runs to 393 residues: Bifunctional enzyme IspD/IspF (393 aa).

The segment at 1–234 is 2-C-methyl-D-erythritol 4-phosphate cytidylyltransferase; sequence MTISQRTAAI…ARLAAQLGDI (234 aa). The tract at residues 235–393 is 2-C-methyl-D-erythritol 2,4-cyclodiphosphate synthase; the sequence is RTGTGYDVHA…SATIRLPWSA (159 aa). Residues D241 and H243 each coordinate a divalent metal cation. Residues 241–243 and 267–268 contribute to the 4-CDP-2-C-methyl-D-erythritol 2-phosphate site; these read DVH and HS. Residue H275 coordinates a divalent metal cation. 4-CDP-2-C-methyl-D-erythritol 2-phosphate contacts are provided by residues 289-291, 365-368, F372, and R375; these read DIG and TTSE.

The protein in the N-terminal section; belongs to the IspD/TarI cytidylyltransferase family. IspD subfamily. It in the C-terminal section; belongs to the IspF family. A divalent metal cation serves as cofactor.

It carries out the reaction 2-C-methyl-D-erythritol 4-phosphate + CTP + H(+) = 4-CDP-2-C-methyl-D-erythritol + diphosphate. The catalysed reaction is 4-CDP-2-C-methyl-D-erythritol 2-phosphate = 2-C-methyl-D-erythritol 2,4-cyclic diphosphate + CMP. Its pathway is isoprenoid biosynthesis; isopentenyl diphosphate biosynthesis via DXP pathway; isopentenyl diphosphate from 1-deoxy-D-xylulose 5-phosphate: step 2/6. The protein operates within isoprenoid biosynthesis; isopentenyl diphosphate biosynthesis via DXP pathway; isopentenyl diphosphate from 1-deoxy-D-xylulose 5-phosphate: step 4/6. In terms of biological role, bifunctional enzyme that catalyzes the formation of 4-diphosphocytidyl-2-C-methyl-D-erythritol from CTP and 2-C-methyl-D-erythritol 4-phosphate (MEP) (IspD), and catalyzes the conversion of 4-diphosphocytidyl-2-C-methyl-D-erythritol 2-phosphate (CDP-ME2P) to 2-C-methyl-D-erythritol 2,4-cyclodiphosphate (ME-CPP) with a corresponding release of cytidine 5-monophosphate (CMP) (IspF). The protein is Bifunctional enzyme IspD/IspF of Bradyrhizobium sp. (strain BTAi1 / ATCC BAA-1182).